Here is a 236-residue protein sequence, read N- to C-terminus: LHFPL tetraspan subfamily member 3 protein (236 aa).

The next 4 membrane-spanning stretches (helical) occupy residues 36–56 (IGVL…VCFI), 110–130 (FFIG…TLFF), 140–160 (ICAW…MIFP), and 191–211 (ILAI…FVLG).

The protein belongs to the LHFP family.

The protein localises to the membrane. This Homo sapiens (Human) protein is LHFPL tetraspan subfamily member 3 protein.